Reading from the N-terminus, the 44-residue chain is Photosystem II reaction center protein K (44 aa).

Residues 1-7 (MESLLLA) constitute a propeptide that is removed on maturation. Residues 23–43 (LPIIPVFFLLLAFVWQAAIGF) traverse the membrane as a helical segment.

It belongs to the PsbK family. In terms of assembly, PSII is composed of 1 copy each of membrane proteins PsbA, PsbB, PsbC, PsbD, PsbE, PsbF, PsbH, PsbI, PsbJ, PsbK, PsbL, PsbM, PsbT, PsbX, PsbY, PsbZ, Psb30/Ycf12, at least 3 peripheral proteins of the oxygen-evolving complex and a large number of cofactors. It forms dimeric complexes.

It localises to the plastid. Its subcellular location is the chloroplast thylakoid membrane. Functionally, one of the components of the core complex of photosystem II (PSII). PSII is a light-driven water:plastoquinone oxidoreductase that uses light energy to abstract electrons from H(2)O, generating O(2) and a proton gradient subsequently used for ATP formation. It consists of a core antenna complex that captures photons, and an electron transfer chain that converts photonic excitation into a charge separation. This Trieres chinensis (Marine centric diatom) protein is Photosystem II reaction center protein K.